An 853-amino-acid chain; its full sequence is DNA mismatch repair protein MutS (853 aa).

614-621 contacts ATP; it reads GPNMGGKS.

It belongs to the DNA mismatch repair MutS family.

In terms of biological role, this protein is involved in the repair of mismatches in DNA. It is possible that it carries out the mismatch recognition step. This protein has a weak ATPase activity. The protein is DNA mismatch repair protein MutS of Cronobacter sakazakii (strain ATCC BAA-894) (Enterobacter sakazakii).